A 178-amino-acid polypeptide reads, in one-letter code: ATP-dependent protease subunit HslV (178 aa).

The active site involves Thr7. Residues Gly162, Cys165, and Thr168 each coordinate Na(+).

It belongs to the peptidase T1B family. HslV subfamily. As to quaternary structure, a double ring-shaped homohexamer of HslV is capped on each side by a ring-shaped HslU homohexamer. The assembly of the HslU/HslV complex is dependent on binding of ATP.

It localises to the cytoplasm. The enzyme catalyses ATP-dependent cleavage of peptide bonds with broad specificity.. Its activity is regulated as follows. Allosterically activated by HslU binding. In terms of biological role, protease subunit of a proteasome-like degradation complex believed to be a general protein degrading machinery. This chain is ATP-dependent protease subunit HslV, found in Azoarcus sp. (strain BH72).